Reading from the N-terminus, the 129-residue chain is Large ribosomal subunit protein eL32 (129 aa).

It belongs to the eukaryotic ribosomal protein eL32 family.

This Methanosarcina acetivorans (strain ATCC 35395 / DSM 2834 / JCM 12185 / C2A) protein is Large ribosomal subunit protein eL32 (rpl32e).